The primary structure comprises 683 residues: Transcription factor SFP1 (683 aa).

Disordered regions lie at residues 156–178 (ATNT…PYHR), 305–324 (DSNS…NIIQ), 332–357 (VNHT…TANP), 399–420 (SNSP…NSGI), 498–517 (HNSM…YNTF), and 535–573 (IDDI…NNYK). Positions 160-173 (LQIQQPTKRPSVSN) are enriched in polar residues. The segment at 230–458 (NTTNMSQIPM…NYSLNKTSRN (229 aa)) is prion domain (PrD). Acidic residues predominate over residues 535–557 (IDDIDDDDDVDDDDDDDDDDDTE). The segment covering 558–573 (NGSSSNGKSVHNNNYK) has biased composition (polar residues). 2 consecutive C2H2-type zinc fingers follow at residues 598–623 (FKCP…LHGH) and 659–683 (YRCE…HSTH).

In terms of assembly, interacts with the target of rapamycin complex 1 (TORC1) in a rapamycin-dependent manner. Interacts with MRS6. In terms of processing, phosphorylated by TORC1 kinase at multiple sites. Phosphorylation regulates nuclear localization and RP promoter binding.

The protein resides in the cytoplasm. It is found in the nucleus. Its function is as follows. Transcription factor that regulates ribosomal protein (RP) and ribosome biogenesis (Ribi) gene expression in response to nutrients and stress. Promotes RP gene expression under optimal growth conditions. Leaves the nucleus upon environmental challenges, resulting in a down-regulation of RP gene transcription. The effect of the environmental cues on SFP1 localization is mediated through the TOR pathway. Also regulates the expression of genes involved in the G2/M transition during the mitotic cell cycle and the DNA-damage response. Required for carbon-source modulation of cell size. This is Transcription factor SFP1 (SFP1) from Saccharomyces cerevisiae (strain ATCC 204508 / S288c) (Baker's yeast).